A 53-amino-acid polypeptide reads, in one-letter code: ATP synthase protein 8 (53 aa).

Residues 9-29 (WIFFLFFFICIFLIFNIMNYF) form a helical membrane-spanning segment.

This sequence belongs to the ATPase protein 8 family. As to quaternary structure, F-type ATPases have 2 components, CF(1) - the catalytic core - and CF(0) - the membrane proton channel.

The protein localises to the mitochondrion membrane. In terms of biological role, mitochondrial membrane ATP synthase (F(1)F(0) ATP synthase or Complex V) produces ATP from ADP in the presence of a proton gradient across the membrane which is generated by electron transport complexes of the respiratory chain. F-type ATPases consist of two structural domains, F(1) - containing the extramembraneous catalytic core and F(0) - containing the membrane proton channel, linked together by a central stalk and a peripheral stalk. During catalysis, ATP synthesis in the catalytic domain of F(1) is coupled via a rotary mechanism of the central stalk subunits to proton translocation. Part of the complex F(0) domain. Minor subunit located with subunit a in the membrane. This chain is ATP synthase protein 8 (mt:ATPase8), found in Bombyx mori (Silk moth).